The sequence spans 169 residues: dCTP pyrophosphatase 1 (169 aa).

A disordered region spans residues 1-26; the sequence is MSASEEMLGGARGESTTATGPFSFSS. The span at 14 to 26 shows a compositional bias: polar residues; the sequence is ESTTATGPFSFSS. Substrate is bound by residues His-37 and 46–50; that span reads WEQFH. Residues Glu-62 and Glu-65 each contribute to the Mg(2+) site. Residue Trp-72 coordinates substrate. Residue Ser-84 is modified to Phosphoserine. 2 residues coordinate Mg(2+): Glu-94 and Asp-97. Residue Tyr-101 participates in substrate binding. Residues 143-169 form a disordered region; it reads LPHGATSENQAMGPADPASESTGQVST.

In terms of assembly, homotetramer. Mg(2+) serves as cofactor.

The protein resides in the cytoplasm. The protein localises to the cytosol. It carries out the reaction dCTP + H2O = dCMP + diphosphate + H(+). Hydrolyzes deoxynucleoside triphosphates (dNTPs) to the corresponding nucleoside monophosphates. Has a strong preference for dCTP and its analogs including 5-iodo-dCTP and 5-methyl-dCTP for which it may even have a higher efficiency. May protect DNA or RNA against the incorporation of these genotoxic nucleotide analogs through their catabolism. This Bos taurus (Bovine) protein is dCTP pyrophosphatase 1.